Consider the following 270-residue polypeptide: MVLLKEYRVILPVSVDEYQVGQLYSVAEASKNETGGGEGVEVLVNEPYEKDGERGQYTHKIYHLQSKVPTFVRMLAPEGALNIHEKAWNAYPYCRTVITNEYMKEDFLIKIETWHKPDLGTQENVHKLEPETWKHVEVIYIDIADRSQVLSKDYKAEEDPAKFKSIKTGRGPLGPNWKQELVNQKDCPYMCAYKLVTVKFKWWGLQNKVENFIHKQERRLFTNFHRQLFCWLDKWVDLTMDDIRRMEEETKRQLDEMRQKDPVKGMTADD.

Residues threonine 58, lysine 60, glutamate 85, asparagine 89, threonine 96, and lysine 194 each coordinate a 1,2-diacyl-sn-glycero-3-phospho-(1D-myo-inositol). Lysine 215 is modified (N6-acetyllysine). Positions 250–263 (TKRQLDEMRQKDPV) are enriched in basic and acidic residues. Residues 250 to 270 (TKRQLDEMRQKDPVKGMTADD) form a disordered region.

This sequence belongs to the PtdIns transfer protein family. PI transfer class I subfamily. In terms of processing, phosphorylated by PKC in a calcium and phosphatidylserine-dependent manner.

The protein resides in the cytoplasm. Its subcellular location is the nucleus. It catalyses the reaction a 1,2-diacyl-sn-glycero-3-phosphocholine(in) = a 1,2-diacyl-sn-glycero-3-phosphocholine(out). The enzyme catalyses a 1,2-diacyl-sn-glycero-3-phospho-(1D-myo-inositol)(in) = a 1,2-diacyl-sn-glycero-3-phospho-(1D-myo-inositol)(out). In terms of biological role, catalyzes the transfer of phosphatidylinositol (PI) and phosphatidylcholine (PC) between membranes. Shows a preference for PI and PC containing shorter saturated or monosaturated acyl chains at the sn-1 and sn-2 positions. Preference order for PC is C16:1 &gt; C16:0 &gt; C18:1 &gt; C18:0 &gt; C20:4 and for PI is C16:1 &gt; C16:0 &gt; C18:1 &gt; C18:0 &gt; C20:4 &gt; C20:3. This Oryctolagus cuniculus (Rabbit) protein is Phosphatidylinositol transfer protein alpha isoform (PITPNA).